We begin with the raw amino-acid sequence, 289 residues long: Oxaloacetate decarboxylase 1 (289 aa).

S50 is a substrate binding site. Position 88 (D88) interacts with Mg(2+). Substrate contacts are provided by R159 and H235.

It belongs to the isocitrate lyase/PEP mutase superfamily. Oxaloacetate decarboxylase family. Homotetramer; dimer of dimers. Mg(2+) is required as a cofactor.

It catalyses the reaction oxaloacetate + H(+) = pyruvate + CO2. In terms of biological role, catalyzes the decarboxylation of oxaloacetate into pyruvate. Seems to play a role in maintaining cellular concentrations of bicarbonate and pyruvate. The sequence is that of Oxaloacetate decarboxylase 1 from Pseudomonas putida (strain W619).